An 89-amino-acid chain; its full sequence is Small ribosomal subunit protein uS14A (89 aa).

The protein belongs to the universal ribosomal protein uS14 family. In terms of assembly, part of the 30S ribosomal subunit. Contacts proteins S3 and S10.

In terms of biological role, binds 16S rRNA, required for the assembly of 30S particles and may also be responsible for determining the conformation of the 16S rRNA at the A site. In Lacticaseibacillus paracasei (strain ATCC 334 / BCRC 17002 / CCUG 31169 / CIP 107868 / KCTC 3260 / NRRL B-441) (Lactobacillus paracasei), this protein is Small ribosomal subunit protein uS14A.